The sequence spans 266 residues: Uracil-DNA glycosylase (266 aa).

Positions 1-25 (MTRRADPAQATLFDDDEPAGAPTAT) are disordered. Aspartate 97 serves as the catalytic Proton acceptor.

Belongs to the uracil-DNA glycosylase (UDG) superfamily. UNG family.

The protein resides in the cytoplasm. It carries out the reaction Hydrolyzes single-stranded DNA or mismatched double-stranded DNA and polynucleotides, releasing free uracil.. Its function is as follows. Excises uracil residues from the DNA which can arise as a result of misincorporation of dUMP residues by DNA polymerase or due to deamination of cytosine. The polypeptide is Uracil-DNA glycosylase (Ralstonia nicotianae (strain ATCC BAA-1114 / GMI1000) (Ralstonia solanacearum)).